We begin with the raw amino-acid sequence, 223 residues long: Small ribosomal subunit protein uS3 (223 aa).

Residues 39–107 (VREFLHKKLA…PVQINIEEVR (69 aa)) enclose the KH type-2 domain.

This sequence belongs to the universal ribosomal protein uS3 family. In terms of assembly, part of the 30S ribosomal subunit. Forms a tight complex with proteins S10 and S14.

Binds the lower part of the 30S subunit head. Binds mRNA in the 70S ribosome, positioning it for translation. The sequence is that of Small ribosomal subunit protein uS3 from Francisella tularensis subsp. mediasiatica (strain FSC147).